Reading from the N-terminus, the 500-residue chain is Na(+)/H(+) antiporter NhaB (500 aa).

The next 13 membrane-spanning stretches (helical) occupy residues 11–31, 34–54, 58–78, 96–116, 121–141, 145–165, 205–225, 241–261, 311–331, 350–370, 394–414, 450–470, and 477–497; these read HGFLGQSPLWYKAVICLFLVL, LLLATIGPAAAGWALVIEFIF, MALKCYPLMPGGLLLIEALLL, VILLLMFMVAGIHFMKELLLF, ILLGVRSKAMLSLLFCVLSAF, FLDALTVTAVIISAAVGFYAV, LLMHGAVGTALGGVCTLVGEP, FLLKVAPVSIPVLGAGLLTCV, ILIICLGLHVAEVGLIGLMVI, FQDAMPFTSLLVVFFAVVAVI, MLYLANGLLSAISDNVFVATI, ATPNGQAAFLFLLTSAIAPLI, and MVWMALPYTVVMGGLGWWAVT.

The protein belongs to the NhaB Na(+)/H(+) (TC 2.A.34) antiporter family.

It is found in the cell inner membrane. It carries out the reaction 2 Na(+)(in) + 3 H(+)(out) = 2 Na(+)(out) + 3 H(+)(in). Na(+)/H(+) antiporter that extrudes sodium in exchange for external protons. This is Na(+)/H(+) antiporter NhaB from Pseudomonas putida (strain ATCC 700007 / DSM 6899 / JCM 31910 / BCRC 17059 / LMG 24140 / F1).